Consider the following 400-residue polypeptide: Elongation factor Tu (400 aa).

The 199-residue stretch at 10 to 208 (KPHVNVGTIG…AMDNYIPDPQ (199 aa)) folds into the tr-type G domain. The interval 19 to 26 (GHIDHGKS) is G1. 19–26 (GHIDHGKS) serves as a coordination point for GTP. A Mg(2+)-binding site is contributed by Ser26. Residues 60–64 (GITIN) form a G2 region. The G3 stretch occupies residues 81–84 (DCPG). Residues 81–85 (DCPGH) and 136–139 (NKTD) contribute to the GTP site. Residues 136–139 (NKTD) are G4. The segment at 174-176 (SAL) is G5.

Belongs to the TRAFAC class translation factor GTPase superfamily. Classic translation factor GTPase family. EF-Tu/EF-1A subfamily. As to quaternary structure, monomer.

Its subcellular location is the cytoplasm. The enzyme catalyses GTP + H2O = GDP + phosphate + H(+). Its function is as follows. GTP hydrolase that promotes the GTP-dependent binding of aminoacyl-tRNA to the A-site of ribosomes during protein biosynthesis. The chain is Elongation factor Tu from Thermotoga neapolitana (strain ATCC 49049 / DSM 4359 / NBRC 107923 / NS-E).